A 693-amino-acid chain; its full sequence is tRNA (guanine(37)-N(1))-methyltransferase (693 aa).

S-adenosyl-L-methionine-binding positions include R327, 365-366, and 392-393; these read DI and DA. A disordered region spans residues 497–572; the sequence is AGDSHQSNSH…QKAEDAPTNE (76 aa). The span at 500–512 shows a compositional bias: low complexity; it reads SHQSNSHQSNPHE. N591 contacts S-adenosyl-L-methionine.

This sequence belongs to the class I-like SAM-binding methyltransferase superfamily. TRM5/TYW2 family. Monomer.

Its subcellular location is the mitochondrion matrix. It localises to the nucleus. The protein localises to the cytoplasm. The catalysed reaction is guanosine(37) in tRNA + S-adenosyl-L-methionine = N(1)-methylguanosine(37) in tRNA + S-adenosyl-L-homocysteine + H(+). In terms of biological role, specifically methylates the N1 position of guanosine-37 in various cytoplasmic and mitochondrial tRNAs. Methylation is not dependent on the nature of the nucleoside 5' of the target nucleoside. This is the first step in the biosynthesis of wybutosine (yW), a modified base adjacent to the anticodon of tRNAs and required for accurate decoding. The sequence is that of tRNA (guanine(37)-N(1))-methyltransferase from Plasmodium vivax (strain Salvador I).